Here is a 367-residue protein sequence, read N- to C-terminus: mRNA-decapping enzyme-like protein (367 aa).

3 disordered regions span residues 144 to 179 (PKASSSKSEFEELEAKPTMAVMDGPLEPSSTARDAP), 196 to 246 (NTAS…SSSP), and 299 to 333 (PNNASHQQRSYGTPVLQPFPPPTPPPSLAPAPTGP). Residues 196–211 (NTASGSASGPYQSSAI) are compositionally biased toward polar residues. Residues 212 to 234 (PHQPHQPHQPTIAPPVAAAAPPQ) show a composition bias toward low complexity. A compositionally biased stretch (polar residues) spans 299–309 (PNNASHQQRSY). The span at 315–331 (QPFPPPTPPPSLAPAPT) shows a compositional bias: pro residues.

Belongs to the DCP1 family. In terms of assembly, homodimer. Component of the decapping complex. Interacts with DCP2 and DCP5. Interacts with BCHA1. As to expression, expressed in seedlings, mostly in root tips, root hairs, and the vascular system. Also present in roots, leaves, stems, and flowers.

The protein resides in the cytoplasm. Its subcellular location is the P-body. As a component of the decapping complex, involved in the degradation of mRNAs. Essential for postembryonic development. The sequence is that of mRNA-decapping enzyme-like protein from Arabidopsis thaliana (Mouse-ear cress).